The chain runs to 193 residues: Corrinoid adenosyltransferase (193 aa).

Residues Thr5–Thr13, Lys22, Arg130–Arg135, and Asn154 contribute to the ATP site.

The protein belongs to the Cob(I)alamin adenosyltransferase family. In terms of assembly, homotrimer.

The protein localises to the cytoplasm. The catalysed reaction is 2 cob(II)yrinate a,c diamide + reduced [electron-transfer flavoprotein] + 2 ATP = 2 adenosylcob(III)yrinate a,c-diamide + 2 triphosphate + oxidized [electron-transfer flavoprotein] + 3 H(+). The enzyme catalyses 2 cob(II)alamin + reduced [electron-transfer flavoprotein] + 2 ATP = 2 adenosylcob(III)alamin + 2 triphosphate + oxidized [electron-transfer flavoprotein] + 3 H(+). It functions in the pathway cofactor biosynthesis; adenosylcobalamin biosynthesis; adenosylcobalamin from cob(II)yrinate a,c-diamide: step 2/7. This Bacillus subtilis (strain 168) protein is Corrinoid adenosyltransferase (yvqK).